Here is a 622-residue protein sequence, read N- to C-terminus: DNA mismatch repair protein MutL (622 aa).

This sequence belongs to the DNA mismatch repair MutL/HexB family.

Functionally, this protein is involved in the repair of mismatches in DNA. It is required for dam-dependent methyl-directed DNA mismatch repair. May act as a 'molecular matchmaker', a protein that promotes the formation of a stable complex between two or more DNA-binding proteins in an ATP-dependent manner without itself being part of a final effector complex. The chain is DNA mismatch repair protein MutL from Prosthecochloris aestuarii (strain DSM 271 / SK 413).